A 741-amino-acid chain; its full sequence is Catalase-peroxidase 2 (741 aa).

Residues 1 to 28 form the signal peptide; it reads MQKKRIGKSVVAALAIIAMSAGTVAAWA. Positions 107–228 form a cross-link, tryptophyl-tyrosyl-methioninium (Trp-Tyr) (with M-254); that stretch reads WHGAGTYRTY…LAATQMGLIY (122 aa). Histidine 108 serves as the catalytic Proton acceptor. Positions 228-254 form a cross-link, tryptophyl-tyrosyl-methioninium (Tyr-Met) (with W-107); that stretch reads YVNPEGPNGNPDPVAAAKDIREAFGRM. Histidine 269 serves as a coordination point for heme b.

It belongs to the peroxidase family. Peroxidase/catalase subfamily. Homodimer or homotetramer. Heme b serves as cofactor. Formation of the three residue Trp-Tyr-Met cross-link is important for the catalase, but not the peroxidase activity of the enzyme.

The catalysed reaction is H2O2 + AH2 = A + 2 H2O. It catalyses the reaction 2 H2O2 = O2 + 2 H2O. In terms of biological role, bifunctional enzyme with both catalase and broad-spectrum peroxidase activity. The polypeptide is Catalase-peroxidase 2 (Burkholderia ambifaria (strain MC40-6)).